Consider the following 707-residue polypeptide: Polyribonucleotide nucleotidyltransferase (707 aa).

Mg(2+) is bound by residues Asp486 and Asp492. Positions 553–612 constitute a KH domain; the sequence is PRIHKIKINPEKIKDVIGKGGSVIRMLTEETGTIIEIEDDGTIKISATIGEKAKNAIRRI. An S1 motif domain is found at 622-690; that stretch reads GRIYSGKVTR…RQGRLRLSIK (69 aa).

Belongs to the polyribonucleotide nucleotidyltransferase family. Component of the RNA degradosome, which is a multiprotein complex involved in RNA processing and mRNA degradation. Requires Mg(2+) as cofactor.

It is found in the cytoplasm. The catalysed reaction is RNA(n+1) + phosphate = RNA(n) + a ribonucleoside 5'-diphosphate. Functionally, involved in mRNA degradation. Catalyzes the phosphorolysis of single-stranded polyribonucleotides processively in the 3'- to 5'-direction. This chain is Polyribonucleotide nucleotidyltransferase, found in Buchnera aphidicola subsp. Schizaphis graminum (strain Sg).